A 420-amino-acid chain; its full sequence is MSKIKVVHPIVEMDGDEQTRVIWKLIKEKLILPYLDVDLKYYDLSIQERDRTNDQVTKDSSYATLKYGVAVKCATITPDEARMKEFNLKEMWKSPNGTIRNILGGTVFREPIIIPKIPRLVPHWEKPIIIGRHAFGDQYRATDIKIKKAGKLRLQFSSDDGKENIDLKVYEFPKSGGIAMAMFNTNDSIKGFAKASFELALKRKLPLFFTTKNTILKNYDNQFKQIFDNLFDKEYKEKFQALKITYEHRLIDDMVAQMLKSKGGFIIAMKNYDGDVQSDIVAQGFGSLGLMTSILITPDGKTFESEAAHGTVTRHFRKHQRGEETSTNSIASIFAWTRAIIQRGKLDNTDDVIKFGNLLEKATLDTVQVGGKMTKDLALMLGKTNRSSYVTTEEFIDEVAKRLQNMMLSSNEDKKGMCKL.

NADP(+) contacts are provided by residues 75–77 (TIT) and R82. T77 contributes to the substrate binding site. Substrate contacts are provided by residues 94–100 (SPNGTIR), R109, and R132. D252 contributes to the Mn(2+) binding site. Residue K260 coordinates NADP(+). Mn(2+) is bound at residue D275. NADP(+)-binding positions include 310-315 (GTVTRH) and N328.

It belongs to the isocitrate and isopropylmalate dehydrogenases family. Requires Mg(2+) as cofactor. It depends on Mn(2+) as a cofactor.

The catalysed reaction is D-threo-isocitrate + NADP(+) = 2-oxoglutarate + CO2 + NADPH. In terms of biological role, may function in the production of NADPH for fatty acid and sterol synthesis. This Saccharomyces cerevisiae (strain ATCC 204508 / S288c) (Baker's yeast) protein is Isocitrate dehydrogenase [NADP] (IDP3).